The following is an 809-amino-acid chain: ATP-dependent RNA helicase HrpB (809 aa).

The region spanning 14-177 (LTALDCAPQV…LPEAPVVISE (164 aa)) is the Helicase ATP-binding domain. 27–34 (APTGAGKS) serves as a coordination point for ATP. Residues 123 to 126 (DEFH) carry the DEFH box motif. In terms of domain architecture, Helicase C-terminal spans 195–368 (RFDDAVAVAT…GLLMELLQWG (174 aa)). Positions 788–809 (PKHVWPDDPANTAPTRRTKKYS) are disordered.

Belongs to the DEAD box helicase family.

It carries out the reaction ATP + H2O = ADP + phosphate + H(+). The sequence is that of ATP-dependent RNA helicase HrpB (hrpB) from Escherichia coli (strain K12).